The sequence spans 466 residues: Protein tilB homolog (466 aa).

4 LRR repeats span residues 22-43 (SLEELSLHQQEIERLEHIDKWC), 45-66 (DLKILYLQNNLIGKIENVSKLK), 67-88 (KLEYLNLALNNIEKIENLEGCE), and 89-110 (ELAKLDLTVNFIGELSSIKTLK). The LRRCT domain maps to 123–161 (NPCAFFDHYREFVVATLPQLKWLDGKGIEPSERIKALQE). The stretch at 178-204 (LKRAKLKEEAQRKHQEEDKNEDKRSNA) forms a coiled coil. Composition is skewed to basic and acidic residues over residues 185 to 202 (EEAQRKHQEEDKNEDKRS) and 269 to 279 (EKQRKNQEKLS). 2 disordered regions span residues 185–206 (EEAQRKHQEEDKNEDKRSNAGF) and 269–288 (EKQRKNQEKLSERKKKVKPP). The region spanning 301–396 (VNEPKIDFSL…GGQRAFTSVK (96 aa)) is the CS domain. A disordered region spans residues 418-466 (VDPSKHSFPDVTNIVQGKKHTPRRRPEPKIIPSEEDPTFEDNPEVPPLI). Over residues 450–460 (SEEDPTFEDNP) the composition is skewed to acidic residues.

Belongs to the tilB family. Interacts (via CS domain) with ZMYND10 (via C-terminus).

The protein localises to the cytoplasm. It localises to the cell projection. It is found in the cilium. May play a role in dynein arm assembly, hence essential for proper axoneme building for cilia motility. The polypeptide is Protein tilB homolog (LRCC6) (Macaca fascicularis (Crab-eating macaque)).